Here is a 334-residue protein sequence, read N- to C-terminus: 4-hydroxy-2-methyl-3-oxo-4-farnesyl-3,4-dihydroquinoline-1-oxide ketoreductase (334 aa).

The Proton donor role is filled by Y139.

Belongs to the 3-beta-HSD family.

It carries out the reaction aurachin B + NAD(+) + H2O = 4-hydroxy-2-methyl-3-oxo-4-[(2E,6E)-farnesyl]-3,4-dihydroquinoline 1-oxide + NADH. The catalysed reaction is 3,4-dihydroxy-2-methyl-4-[(2E,6E)-farnesyl]-3,4-dihydroquinoline 1-oxide + NAD(+) = 4-hydroxy-2-methyl-3-oxo-4-[(2E,6E)-farnesyl]-3,4-dihydroquinoline 1-oxide + NADH + H(+). Its function is as follows. Ketoreductase that catalyzes the final step in the conversion of aurachin C to aurachin B. Catalyzes the reduction of 4-hydroxy-2-methyl-3-oxo-4-[(2E,6E)-farnesyl]-3,4-dihydroquinoline-1-oxide to form 3,4-dihydroxy-2-methyl-4-[(2E,6E)-farnesyl]-3,4-dihydroquinoline 1-oxide, which then undergoes a spontaneous dehydration to form aurachin B. Accepts both NADH and NADPH, but has a preference for NADH. The chain is 4-hydroxy-2-methyl-3-oxo-4-farnesyl-3,4-dihydroquinoline-1-oxide ketoreductase from Stigmatella aurantiaca.